A 155-amino-acid polypeptide reads, in one-letter code: Ribonuclease H (155 aa).

An RNase H type-1 domain is found at 1–142 (MTKQVEIFTD…CDELARAAAM (142 aa)). 4 residues coordinate Mg(2+): Asp-10, Glu-48, Asp-70, and Asp-134.

This sequence belongs to the RNase H family. Monomer. It depends on Mg(2+) as a cofactor.

Its subcellular location is the cytoplasm. It catalyses the reaction Endonucleolytic cleavage to 5'-phosphomonoester.. Functionally, endonuclease that specifically degrades the RNA of RNA-DNA hybrids. The protein is Ribonuclease H of Enterobacter sp. (strain 638).